We begin with the raw amino-acid sequence, 497 residues long: 4,4'-diaponeurosporene oxygenase (497 aa).

7–19 serves as a coordination point for FAD; sequence VIGGGLGGISAAI.

The protein belongs to the carotenoid/retinoid oxidoreductase family. CrtP subfamily. Requires FAD as cofactor.

The enzyme catalyses all-trans-4,4'-diaponeurosporene + 2 AH2 + 2 O2 = 4,4'-diaponeurosporenal + 2 A + 3 H2O. Its pathway is carotenoid biosynthesis; staphyloxanthin biosynthesis; staphyloxanthin from farnesyl diphosphate: step 3/5. In terms of biological role, involved in the biosynthesis of the yellow-orange carotenoid staphyloxanthin, which plays a role in the virulence via its protective function against oxidative stress. Catalyzes the oxidation of the terminal methyl side group of 4,4'-diaponeurosporene to form 4,4'-diaponeurosporen-4-al. This Staphylococcus aureus (strain MSSA476) protein is 4,4'-diaponeurosporene oxygenase.